A 70-amino-acid polypeptide reads, in one-letter code: Neuropeptide SIFamide (70 aa).

The first 22 residues, 1 to 22, serve as a signal peptide directing secretion; that stretch reads MRFIVALCLFAIVMCIIHKAEG. F34 is modified (phenylalanine amide). Positions 38 to 70 are excised as a propeptide; it reads GVVEYDTTGRALSALCEIASETCQAWYQTLENK.

In terms of tissue distribution, expressed in antennal lobe (AL) and gnathal ganglion (GNG) with expression detected in most animals (at protein level). Not expressed in corpora cardiaca (CC) and corpora allata (CA) (at protein level).

Its subcellular location is the secreted. In terms of biological role, ligand for the neuropeptide SIFamide receptor. This is Neuropeptide SIFamide from Agrotis ipsilon (Black cutworm moth).